We begin with the raw amino-acid sequence, 76 residues long: Kappa-actitoxin-Avd4l (76 aa).

An N-terminal signal peptide occupies residues 1 to 19 (MNKALFLCLVVLCAAVVFA). A propeptide spanning residues 20-31 (AEDLQKAKHAPF) is cleaved from the precursor. 3 disulfides stabilise this stretch: cysteine 37/cysteine 72, cysteine 39/cysteine 65, and cysteine 55/cysteine 73.

This sequence belongs to the sea anemone type 3 (BDS) potassium channel toxin family. As to expression, weakly expressed in the ectodermal tissue from the distal and proximal tentacles, body wall, and oral disk.

Its subcellular location is the secreted. The protein resides in the nematocyst. Functionally, blocks Kv3 voltage-gated potassium channels. Reduces blood pressure. The sequence is that of Kappa-actitoxin-Avd4l from Anemonia viridis (Snakelocks anemone).